The sequence spans 237 residues: Orotate phosphoribosyltransferase (237 aa).

Position 29 (Lys-29) interacts with 5-phospho-alpha-D-ribose 1-diphosphate. 37–38 (FF) lines the orotate pocket. 5-phospho-alpha-D-ribose 1-diphosphate-binding positions include 79-80 (YK), Arg-105, Lys-106, Lys-109, His-111, and 130-138 (DDVMSAGTA). The orotate site is built by Ser-134 and Arg-162.

Belongs to the purine/pyrimidine phosphoribosyltransferase family. PyrE subfamily. In terms of assembly, homodimer. Mg(2+) serves as cofactor.

The enzyme catalyses orotidine 5'-phosphate + diphosphate = orotate + 5-phospho-alpha-D-ribose 1-diphosphate. It participates in pyrimidine metabolism; UMP biosynthesis via de novo pathway; UMP from orotate: step 1/2. Catalyzes the transfer of a ribosyl phosphate group from 5-phosphoribose 1-diphosphate to orotate, leading to the formation of orotidine monophosphate (OMP). The chain is Orotate phosphoribosyltransferase from Polaromonas naphthalenivorans (strain CJ2).